The primary structure comprises 272 residues: Shikimate dehydrogenase (NADP(+)) (272 aa).

Residues 14 to 16 (SKS) and threonine 61 contribute to the shikimate site. Lysine 65 (proton acceptor) is an active-site residue. NADP(+) is bound at residue glutamate 77. Residues asparagine 86 and aspartate 102 each coordinate shikimate. Residues 126-130 (GAGGA), 149-154 (NRTVSR), and methionine 213 contribute to the NADP(+) site. Tyrosine 215 lines the shikimate pocket. Glycine 237 is an NADP(+) binding site.

Belongs to the shikimate dehydrogenase family. As to quaternary structure, homodimer.

It carries out the reaction shikimate + NADP(+) = 3-dehydroshikimate + NADPH + H(+). It functions in the pathway metabolic intermediate biosynthesis; chorismate biosynthesis; chorismate from D-erythrose 4-phosphate and phosphoenolpyruvate: step 4/7. Involved in the biosynthesis of the chorismate, which leads to the biosynthesis of aromatic amino acids. Catalyzes the reversible NADPH linked reduction of 3-dehydroshikimate (DHSA) to yield shikimate (SA). This chain is Shikimate dehydrogenase (NADP(+)), found in Escherichia coli O45:K1 (strain S88 / ExPEC).